The following is a 336-amino-acid chain: Deoxyhypusine hydroxylase (336 aa).

2 HEAT-like PBS-type repeats span residues 68 to 94 and 101 to 127; these read LKHELAYCLGQTRNTDALPFLLDVVQD and CRHEAAEALGALGYESSLEVLKALRDN. Fe cation is bound by residues H70, E71, H103, and E104. The interval 158 to 179 is disordered; sequence LKPSDFTSIDPAPPMPLTAKEP. HEAT-like PBS-type repeat units lie at residues 235–261 and 268–295; these read FRHEIAFVFGQLCHPASVPSLTETLSD and VRHEAAEALGSLGDVEGVEDTLKKFLND. Fe cation is bound by residues H237, E238, H270, and E271.

The protein belongs to the deoxyhypusine hydroxylase family. It depends on Fe(2+) as a cofactor.

The protein resides in the cytoplasm. It localises to the nucleus. The enzyme catalyses [eIF5A protein]-deoxyhypusine + AH2 + O2 = [eIF5A protein]-hypusine + A + H2O. It functions in the pathway protein modification; eIF5A hypusination. Catalyzes the hydroxylation of the N(6)-(4-aminobutyl)-L-lysine intermediate to form hypusine, an essential post-translational modification only found in mature eIF-5A factor. The polypeptide is Deoxyhypusine hydroxylase (lia1) (Emericella nidulans (strain FGSC A4 / ATCC 38163 / CBS 112.46 / NRRL 194 / M139) (Aspergillus nidulans)).